The sequence spans 49 residues: Omega-segestritoxin-Sf1a (49 aa).

4 disulfides stabilise this stretch: Cys3–Cys22, Cys10–Cys27, Cys21–Cys48, and Cys29–Cys46.

Expressed by the venom gland.

It localises to the secreted. Functionally, potent and selective blocker of N-type voltage-gated calcium channels (Cav2.2/CACNA1B). Also blocks vertebrate Cav2.1/CACNA1A (P/Q-type) and Cav1.2/CACNA1C (L-type) channels at very high concentration (2 micromolar). In Segestria florentina (Tube-web spider), this protein is Omega-segestritoxin-Sf1a.